Consider the following 295-residue polypeptide: Ubiquitin-conjugating enzyme E2-34 kDa (295 aa).

Positions 7–169 (TASSLLLRQY…VKMEVERSKQ (163 aa)) constitute a UBC core domain. Residue Cys95 is the Glycyl thioester intermediate of the active site. Residues 185 to 295 (ISQSKLDEPE…EDVERVSKKI (111 aa)) form a disordered region. Residue Ser186 is modified to Phosphoserine. Over residues 189–200 (KLDEPESNKDMA) the composition is skewed to basic and acidic residues. 2 stretches are compositionally biased toward acidic residues: residues 207–226 (SDLD…DYDD) and 234–265 (EDDD…DSID). Basic and acidic residues predominate over residues 269–279 (VMDRKQPHKAE). Phosphoserine is present on residues Ser282 and Ser292.

This sequence belongs to the ubiquitin-conjugating enzyme family. In terms of assembly, interacts with CDC53. Component of the E3 ubiquitin ligase complexes SCF with CDC53, SKP1/CBF3D, HRT1 and some F-box proteins like MET30 and CDC4.

The protein resides in the cytoplasm. It is found in the nucleus. It carries out the reaction S-ubiquitinyl-[E1 ubiquitin-activating enzyme]-L-cysteine + [E2 ubiquitin-conjugating enzyme]-L-cysteine = [E1 ubiquitin-activating enzyme]-L-cysteine + S-ubiquitinyl-[E2 ubiquitin-conjugating enzyme]-L-cysteine.. The protein operates within protein modification; protein ubiquitination. Its function is as follows. Catalyzes the covalent attachment of ubiquitin to other proteins. Capable, in vitro, to ubiquitinate histone H2A. In terms of biological role, mediates the initiation of DNA replication (transition of G1 to S phase in cell cycle). Essential component of the E3 ubiquitin ligase complex SCF (SKP1-CUL1-F-box protein), which mediates the ubiquitination and subsequent proteasomal degradation of target proteins. Involved in the regulation of methionine biosynthesis genes and in the degradation of CDC6 together with CDC4 and CDC53. The sequence is that of Ubiquitin-conjugating enzyme E2-34 kDa (CDC34) from Saccharomyces cerevisiae (strain ATCC 204508 / S288c) (Baker's yeast).